The sequence spans 812 residues: Fibrous sheath CABYR-binding protein (812 aa).

Residues methionine 1 to alanine 66 are disordered. A phosphoserine mark is found at serine 25, serine 57, serine 125, serine 133, serine 184, and serine 273. Disordered regions lie at residues isoleucine 269–threonine 333, aspartate 367–serine 388, phenylalanine 424–leucine 547, and proline 672–lysine 741. Low complexity predominate over residues alanine 275–lysine 286. Positions glutamate 488–proline 501 are enriched in pro residues. Low complexity predominate over residues valine 502–proline 513. A compositionally biased stretch (acidic residues) spans glutamate 514–glutamate 528.

In terms of assembly, interacts with CABYR.

The protein resides in the cell projection. The protein localises to the cilium. It is found in the flagellum. May be involved in the later stages of fibrous sheath biogenesis. Binds calcium. The chain is Fibrous sheath CABYR-binding protein from Rattus norvegicus (Rat).